A 348-amino-acid polypeptide reads, in one-letter code: MKTAENIRGTGSDGPRKRGLCVLCGLPAAGKSTFARALAHRLQQEQGWAIGVVAYDDVMPDAFLAGARARPAPSQWKLLRQELLKYLEYFLMAVINGCQMSVPPNRTEAMWEDFITCLKDQDLIFSAAFEAQSCYLLTKTAVSRPLFLVLDDNFYYQSMRYEVYQLARKYSLGFCQLFLDCPLETCLQRNGQRPQALPPETIHLMGRKLEKPNPEKNAWEHNSLTIPSPACASEASLEVTDLLLTALENPVKYAEDNMEQKDTDRIICSTNILHKTDQTLRRIVSQTMKEAKGNQEAFSEMTFKQRWVRANHAAIWRIILGNEHIKCRSAKVGWLQCCRIEKRPLSTG.

25 to 32 (GLPAAGKS) is an ATP binding site.

The protein belongs to the L-seryl-tRNA(Sec) kinase family. Mg(2+) serves as cofactor.

The catalysed reaction is L-seryl-tRNA(Sec) + ATP = O-phospho-L-seryl-tRNA(Sec) + ADP. It functions in the pathway aminoacyl-tRNA biosynthesis; selenocysteinyl-tRNA(Sec) biosynthesis; selenocysteinyl-tRNA(Sec) from L-seryl-tRNA(Sec) (archaeal/eukaryal route): step 1/2. Its function is as follows. Specifically phosphorylates seryl-tRNA(Sec) to O-phosphoseryl-tRNA(Sec), an activated intermediate for selenocysteine biosynthesis. In Homo sapiens (Human), this protein is L-seryl-tRNA(Sec) kinase (PSTK).